The following is a 386-amino-acid chain: MTSLFRRSSSGSGGGGTAGARGGGGGTAAPQELNNSRPARQVRRLEFNQAMDDFKTMFPNMDYDIIECVLRANSGAVDATIDQLLQMNLEGGGSSGGVYEDSSDSEDSIPPEILERTLEPDSSDEEPPPVYSPPAYHMHVFDRPYPLAPPTPPPRIDALGSGAPTSQRRYRNWNPPLLGNLPDDFLRILPQQLDSIQGNAGGPKPGSGEGCPPAMAGPGPGDQESRWKQYLEDERIALFLQNEEFMKELQRNRDFLLALERDRLKYESQKSKSSSVAVGNDFGFSSPVPGTGDANPAVSEDALFRDKLKHMGKSTRRKLFELARAFSEKTKMRKSKRKHLLKHQSLGAAASTANLLDDVEGHACDEDFRGRRQEAPKVEEGLREGQ.

Low complexity predominate over residues 1–10; sequence MTSLFRRSSS. The tract at residues 1–40 is disordered; the sequence is MTSLFRRSSSGSGGGGTAGARGGGGGTAAPQELNNSRPAR. Over residues 11 to 27 the composition is skewed to gly residues; it reads GSGGGGTAGARGGGGGT. In terms of domain architecture, CUE spans 46 to 89; that stretch reads EFNQAMDDFKTMFPNMDYDIIECVLRANSGAVDATIDQLLQMNL. Disordered stretches follow at residues 147-172, 195-225, and 367-386; these read LAPPTPPPRIDALGSGAPTSQRRYRN, SIQGNAGGPKPGSGEGCPPAMAGPGPGDQES, and DFRGRRQEAPKVEEGLREGQ. Residues 199-209 show a composition bias toward gly residues; sequence NAGGPKPGSGE.

The sequence is that of CUE domain-containing protein 1 (CUEDC1) from Homo sapiens (Human).